We begin with the raw amino-acid sequence, 522 residues long: MGQEKHTDAASQSRDPEAVAAHENDQLRQRNHALAKALTRATEELRKAKAQLEQFMAPPLTMATMVRVHRCSTDEHGVRHASAEILNGNRRQIVPLSPTVNPAQLGSGQGVLLDANMVIVDSCETPTTGPMRAVSESLADGRLIVSDVGGNRGVVMRASAVARTPINVDDRVVIDPSGTYVLSVLPQEQAQDLLLEETPDVSFTDIGGLDEQIARIRDAVQLPFQHRDLFDRFDLKAPKGVLLYGPPGNGKTLIAKAIAHELAAGSGNDGVFLSVKGPELLNKFVGESERLIRRIFERAKELSGAGRPVIVFIDEMDSLLRTRGTGVSSDVETTIVPQFLTELDGVESLDDVMVIGASNRIDMIDPAVLRPGRLDVKIHVTRPDETAAMAITRHYLTDALPLEPGRDADALAASLVRDLFRRDESRLLATLDEQGRRRGIYMADIVSGAMLRNIVDRAKTKAVKAEILHGSVSRDDEPQGITEARIHEAIDDEYEQNRSTINETDPGQWLRINALTLAADGV.

A disordered region spans residues 1–26 (MGQEKHTDAASQSRDPEAVAAHENDQ). Positions 20-57 (AAHENDQLRQRNHALAKALTRATEELRKAKAQLEQFMA) form a coiled coil. Residue 248–253 (GNGKTL) participates in ATP binding.

Belongs to the AAA ATPase family. Homohexamer. Assembles into a hexameric ring structure.

The sequence is that of AAA ATPase forming ring-shaped complexes from Bifidobacterium animalis subsp. lactis (strain AD011).